We begin with the raw amino-acid sequence, 212 residues long: Large ribosomal subunit protein uL3 (212 aa).

Gln153 is subject to N5-methylglutamine.

This sequence belongs to the universal ribosomal protein uL3 family. Part of the 50S ribosomal subunit. Forms a cluster with proteins L14 and L19. In terms of processing, methylated by PrmB.

One of the primary rRNA binding proteins, it binds directly near the 3'-end of the 23S rRNA, where it nucleates assembly of the 50S subunit. In Shewanella halifaxensis (strain HAW-EB4), this protein is Large ribosomal subunit protein uL3.